Consider the following 143-residue polypeptide: Large-conductance mechanosensitive channel (143 aa).

Helical transmembrane passes span 16 to 36 (VMDLAVGVIIGGAFSGITNSL), 40 to 60 (IIMPIVAFIAGGELNFKNMFI), and 87 to 107 (GSFITVLINFLILAFIIFMMV).

Belongs to the MscL family. Homopentamer.

The protein localises to the cell inner membrane. Its function is as follows. Channel that opens in response to stretch forces in the membrane lipid bilayer. May participate in the regulation of osmotic pressure changes within the cell. The polypeptide is Large-conductance mechanosensitive channel (Psychrobacter sp. (strain PRwf-1)).